The primary structure comprises 235 residues: Small ribosomal subunit protein eS6 (235 aa).

The disordered stretch occupies residues 190–212 (GFHPRERGERRRKSVRGRMIPDP).

It belongs to the eukaryotic ribosomal protein eS6 family.

This chain is Small ribosomal subunit protein eS6, found in Aeropyrum pernix (strain ATCC 700893 / DSM 11879 / JCM 9820 / NBRC 100138 / K1).